The primary structure comprises 674 residues: Zyxin (674 aa).

The disordered stretch occupies residues 35 to 447 (PPKPKVNPFR…PHQDQTSGSQ (413 aa)). Residues 86-109 (LPPPPPNEEPMSPPGSSFPPPPPS) are compositionally biased toward pro residues. Residues 110–120 (FGDDGPGSPLG) are compositionally biased toward low complexity. 5 stretches are compositionally biased toward pro residues: residues 121-148 (LFPP…PPPL), 162-180 (ASVP…PAPP), 187-209 (KPAP…PPQS), 222-240 (KPSP…PPVA), and 254-266 (AAPP…PPAP). Composition is skewed to basic and acidic residues over residues 328–341 (AKHE…KHEA) and 358–387 (QRDK…RGER). LIM zinc-binding domains follow at residues 481 to 542 (ELCG…TLEC), 543 to 600 (CAVC…RRYA), and 601 to 671 (PRCT…RARA).

It belongs to the zyxin/ajuba family. Interacts (via LIM2 domain) with hesx1/anf1.

It is found in the cytoplasm. The protein resides in the cytoskeleton. It localises to the cell junction. Its subcellular location is the focal adhesion. Adhesion plaque protein. May be a component of a signal transduction pathway that mediates adhesion-stimulated changes in gene expression. Suppresses the transcription-repressing activity of hesx1/anf1. This chain is Zyxin, found in Xenopus tropicalis (Western clawed frog).